We begin with the raw amino-acid sequence, 261 residues long: Indole-3-glycerol phosphate synthase (261 aa).

Belongs to the TrpC family.

It catalyses the reaction 1-(2-carboxyphenylamino)-1-deoxy-D-ribulose 5-phosphate + H(+) = (1S,2R)-1-C-(indol-3-yl)glycerol 3-phosphate + CO2 + H2O. It functions in the pathway amino-acid biosynthesis; L-tryptophan biosynthesis; L-tryptophan from chorismate: step 4/5. This is Indole-3-glycerol phosphate synthase from Burkholderia multivorans (strain ATCC 17616 / 249).